A 259-amino-acid chain; its full sequence is MSLDLVHFPNYKKTFFGSSFQSDTLALLTRIRDEIGCRYVTHTYRGRVGDCTKVNSADLTVLITLPATWVARYSSKNYFAIDPVFQEDAPYYRNDTSAIARDLKEDADICPAVAELLHDAEKHGLGNLFIAVSARNPKGVAGCTVFTFEVEDEDRTQFLARMRPRLLSLAGIIHGTVCGCKDANSVASLLTPREVDCLRWAANGKTDGEIAEILSIARWTVVTYLQNAKIKLNCSNRTSAVATALSLGIIDMPEVQHLV.

The segment at 76–179 (KNYFAIDPVF…AGIIHGTVCG (104 aa)) is C12-HSL binding. An HTH luxR-type domain is found at 183 to 248 (ANSVASLLTP…SAVATALSLG (66 aa)). Residues 207-226 (DGEIAEILSIARWTVVTYLQ) constitute a DNA-binding region (H-T-H motif).

Transcriptional regulator involved in the global control of Brucella gene expression. Mediates the effects of the quorum sensing autoinducer C12-HSL (N-dodecanoyl-homoserine lactone) on a large and diverse number of genes. The chain is HTH-type quorum sensing-dependent transcriptional regulator VjbR (vjbR) from Brucella ovis (strain ATCC 25840 / 63/290 / NCTC 10512).